The chain runs to 699 residues: Elongation factor G (699 aa).

Residues 8-283 (EHIRNIGICA…AVVDFLPSPI (276 aa)) enclose the tr-type G domain. Residues 17–24 (AHIDAGKT), 81–85 (DTPGH), and 135–138 (NKMD) contribute to the GTP site.

This sequence belongs to the TRAFAC class translation factor GTPase superfamily. Classic translation factor GTPase family. EF-G/EF-2 subfamily.

The protein resides in the cytoplasm. Its function is as follows. Catalyzes the GTP-dependent ribosomal translocation step during translation elongation. During this step, the ribosome changes from the pre-translocational (PRE) to the post-translocational (POST) state as the newly formed A-site-bound peptidyl-tRNA and P-site-bound deacylated tRNA move to the P and E sites, respectively. Catalyzes the coordinated movement of the two tRNA molecules, the mRNA and conformational changes in the ribosome. The protein is Elongation factor G of Rickettsia africae (strain ESF-5).